We begin with the raw amino-acid sequence, 1431 residues long: Stabilin-2 (1431 aa).

At 1-1322 the chain is on the extracellular side; the sequence is SLPSLLTRLE…PPTAATAAHS (1322 aa). The FAS1 domain occupies 2-130; it reads LPSLLTRLEQ…GVIHGLEKVL (129 aa). 2 N-linked (GlcNAc...) asparagine glycosylation sites follow: asparagine 112 and asparagine 140. The region spanning 207 to 272 is the Laminin EGF-like 1 domain; sequence PQCQACPGRG…CSCVHGRCSQ (66 aa). Disulfide bonds link cysteine 212/cysteine 226, cysteine 220/cysteine 236, cysteine 238/cysteine 247, cysteine 259/cysteine 270, cysteine 263/cysteine 280, cysteine 282/cysteine 291, cysteine 300/cysteine 310, cysteine 304/cysteine 320, cysteine 322/cysteine 333, cysteine 339/cysteine 352, cysteine 346/cysteine 362, cysteine 364/cysteine 375, cysteine 381/cysteine 394, cysteine 388/cysteine 404, cysteine 406/cysteine 417, cysteine 423/cysteine 436, cysteine 430/cysteine 446, and cysteine 448/cysteine 459. Asparagine 231 and asparagine 243 each carry an N-linked (GlcNAc...) asparagine glycan. EGF-like domains lie at 296-334, 335-376, 377-418, and 419-460; these read TTDN…TVCT, AINA…IVCL, EINP…KVCS, and LINV…IVCR. Asparagine 301 carries N-linked (GlcNAc...) asparagine glycosylation. Asparagine 329 carries N-linked (GlcNAc...) asparagine glycosylation. Residue asparagine 437 is glycosylated (N-linked (GlcNAc...) asparagine). 2 consecutive FAS1 domains span residues 460–588 and 604–745; these read RGSI…DKLL and VLQN…DCLL. The N-linked (GlcNAc...) asparagine glycan is linked to asparagine 607. One can recognise a Laminin EGF-like 2 domain in the interval 822–887; the sequence is PDCQACPGGP…SCSEHGQCDE (66 aa). 6 disulfides stabilise this stretch: cysteine 827-cysteine 841, cysteine 835-cysteine 851, cysteine 853-cysteine 862, cysteine 874-cysteine 885, cysteine 879-cysteine 895, and cysteine 897-cysteine 906. A glycan (N-linked (GlcNAc...) asparagine) is linked at asparagine 858. Asparagine 929 carries an N-linked (GlcNAc...) asparagine glycan. EGF-like domains are found at residues 947–987 and 988–1030; these read VVDF…YSCI and EIDP…VDCE. 8 disulfide bridges follow: cysteine 951–cysteine 964, cysteine 958–cysteine 973, cysteine 975–cysteine 986, cysteine 992–cysteine 1006, cysteine 1000–cysteine 1016, cysteine 1018–cysteine 1029, cysteine 1085–cysteine 1154, and cysteine 1109–cysteine 1130. Residues 1063 to 1156 enclose the Link domain; that stretch reads GVFHLRSPLG…SEMWDVFCYR (94 aa). Residues asparagine 1145, asparagine 1161, asparagine 1233, asparagine 1249, and asparagine 1258 are each glycosylated (N-linked (GlcNAc...) asparagine). One can recognise an FAS1 4 domain in the interval 1176–1310; sequence SGNLLQVLMS…GILHIISEPL (135 aa). Residues 1323-1343 traverse the membrane as a helical segment; that stretch reads GLGTGIFCAVVLVTGAIALAA. Residues 1344–1431 are Cytoplasmic-facing; that stretch reads YSYFRLKQRT…QQATTVTVPR (88 aa). Positions 1368-1378 are interaction with TMSB4X; the sequence is WLLASSSPRIS.

Interacts with GULP1, heparin, alpha-M/beta-2 integrin (ITGAM and ITGB2), and thymosin beta 4 (TMSB4X). In terms of processing, glycosylated. Proteolytically processed to yield a 175 kDa protein. As to expression, initially expressed in all vascular cells, including those of sinusoidal-like structures, vitellin veins, and hepatic veins or sinus venosus, in E13.5 fetal liver. The expression then progressively disappears in the portal and hepatic veins, but the expression in sinusoidals endothelial cells (SECs) is retained and becomes stronger during development.

The protein localises to the cytoplasm. The protein resides in the cell membrane. In terms of biological role, phosphatidylserine receptor that enhances the engulfment of apoptotic cells. Hyaluronan receptor that binds to and mediates endocytosis of hyaluronic acid (HA). Also acts, in different species, as a primary systemic scavenger receptor for heparin (Hep), chondroitin sulfate (CS), dermatan sulfate (DS), nonglycosaminoglycan (GAG), acetylated low-density lipoprotein (AcLDL), pro-collagen propeptides and advanced glycation end products (AGE). May serve to maintain tissue integrity by supporting extracellular matrix turnover or it may contribute to maintaining fluidity of bodily liquids by resorption of hyaluronan. Counter receptor which plays an important role in lymphocyte recruitment in the hepatic vasculature. Binds to both Gram-positive and Gram-negative bacteria and may play a role in defense against bacterial infection. The proteolytically processed 175 kDa form also functions as an endocytosis receptor for heparin internalization as well as HA and CS. The protein is Stabilin-2 of Rattus norvegicus (Rat).